The primary structure comprises 494 residues: UPF0164 protein TP_0859/TP_0860 (494 aa).

The N-terminal stretch at 1–44 (MVRRPCVSAAPVRVGGRLVFGFARVGSRGLCLGALLLSPRIVLA) is a signal peptide.

It belongs to the UPF0164 family.

The polypeptide is UPF0164 protein TP_0859/TP_0860 (Treponema pallidum (strain Nichols)).